The following is a 425-amino-acid chain: CAAX prenyl protease 1 homolog (425 aa).

Helical transmembrane passes span 3–23 (LPYL…ETYL), 62–80 (FHFI…ILYY), 109–129 (LAFL…FSLY), 155–175 (GILL…IIVQ), and 188–208 (FMFA…APLF). His284 contributes to the Zn(2+) binding site. Residue Glu285 is part of the active site. Residue His288 coordinates Zn(2+). 2 helical membrane-spanning segments follow: residues 295 to 315 (VYSF…YTLV) and 332 to 352 (VIIG…LLSF). Residue Glu362 participates in Zn(2+) binding. Catalysis depends on Asp366, which acts as the Proton donor.

Belongs to the peptidase M48A family. It depends on Zn(2+) as a cofactor.

It localises to the endoplasmic reticulum membrane. It catalyses the reaction Hydrolyzes the peptide bond -P2-(S-farnesyl or geranylgeranyl)C-P1'-P2'-P3'-COOH where P1' and P2' are amino acids with aliphatic side chains and P3' is any C-terminal residue.. In terms of biological role, proteolytically removes the C-terminal three residues of farnesylated proteins. This is CAAX prenyl protease 1 homolog (FACE1) from Oryza sativa subsp. japonica (Rice).